A 349-amino-acid chain; its full sequence is DNA replication and repair protein RecF (349 aa).

30 to 37 (GKNGSGKT) contacts ATP.

It belongs to the RecF family.

The protein localises to the cytoplasm. Its function is as follows. The RecF protein is involved in DNA metabolism; it is required for DNA replication and normal SOS inducibility. RecF binds preferentially to single-stranded, linear DNA. It also seems to bind ATP. The polypeptide is DNA replication and repair protein RecF (Francisella tularensis subsp. novicida (strain U112)).